Reading from the N-terminus, the 354-residue chain is MPASPLVWINGLHMTEQRPIAVLGGGSFGTAVANLLAENGHQVRQWMRDPEQAEAIRVNRENPRYLKGIKILPGVTAVTDLQETLDACELCFVALPSSALRTVLAAHAERLSGKMLVSLTKGIEAQTFKLMSQILEEIAPQARIGVLSGPNLAREIAEHALTATVVASEDEELCKAVQAALHGRTFRVYASADRFGVELGGALKNVYAIIAGMAVALEMGENTKSMLITRALAEMTRFAVNQGANPMTFLGLAGVGDLIVTCSSPKSRNYQVGFALGQGLSLDEAVSRLGEVAEGVNTLKVLKAKAQEVGVYMPLVAGLHAILFEGRTLEQVIGLLMRAEPKTDVDFISTSGFN.

4 residues coordinate NADPH: S27, F28, R48, and K121. The sn-glycerol 3-phosphate site is built by K121 and G149. A153 serves as a coordination point for NADPH. Positions 204, 257, 267, 268, and 269 each coordinate sn-glycerol 3-phosphate. The active-site Proton acceptor is the K204. R268 is an NADPH binding site. Residues V292 and E294 each coordinate NADPH.

It belongs to the NAD-dependent glycerol-3-phosphate dehydrogenase family.

The protein localises to the cytoplasm. It carries out the reaction sn-glycerol 3-phosphate + NAD(+) = dihydroxyacetone phosphate + NADH + H(+). The enzyme catalyses sn-glycerol 3-phosphate + NADP(+) = dihydroxyacetone phosphate + NADPH + H(+). The protein operates within membrane lipid metabolism; glycerophospholipid metabolism. In terms of biological role, catalyzes the reduction of the glycolytic intermediate dihydroxyacetone phosphate (DHAP) to sn-glycerol 3-phosphate (G3P), the key precursor for phospholipid synthesis. The protein is Glycerol-3-phosphate dehydrogenase [NAD(P)+] of Pseudomonas fluorescens (strain Pf0-1).